A 254-amino-acid chain; its full sequence is Hydrolase tropI (254 aa).

Residues Cys-141, Asp-187, and His-219 contribute to the active site.

The protein belongs to the dienelactone hydrolase family.

Its pathway is secondary metabolite biosynthesis. Hydrolase; part of the gene cluster that mediates the biosynthesis of the tropolone class of fungal maleic anhydrides. The pathway begins with the synthesis of 3-methylorcinaldehyde by the non-reducing polyketide synthase (PKS) tropA. 3-methylorcinaldehyde is the substrate for the FAD-dependent monooxygenase tropB to yield a dearomatized hydroxycyclohexadione. The 2-oxoglutarate-dependent dioxygenase tropC then performs the oxidative ring expansion to provide the first tropolone metabolite stipitaldehyde. Trop D converts stipitaldehyde into stipitacetal which is in turn converted to stipitalide by the short-chain dehydrogenase/reductase tropE. The next steps involve tropF, tropG, tropH, tropI and tropJ to form successive tropolone maleic anhydrides including stipitaldehydic, stipitatonic and stipitatic acids. This Talaromyces stipitatus (strain ATCC 10500 / CBS 375.48 / QM 6759 / NRRL 1006) (Penicillium stipitatum) protein is Hydrolase tropI.